A 357-amino-acid polypeptide reads, in one-letter code: DENN domain-containing protein 10 (357 aa).

In terms of domain architecture, uDENN spans 1–140; it reads MAAAEVADTQ…TKGICQSEEN (140 aa). The region spanning 165-299 is the cDENN domain; it reads QFGMETVILH…PEKSESHVIQ (135 aa). The 57-residue stretch at 301 to 357 folds into the dDENN domain; the sequence is IALKTREIFTNLAPFSEVSADGEKRVLNLEALKQKRFPPATENFLYHLAAAEQMLKI.

The protein belongs to the DENND10 family. Interacts with the coiled-coil heterodimer of CCDC22 and CCDC93; the interaction is direct. Interacts with RAB27A and RAB27B (GDP-bound forms preferentially).

The protein resides in the late endosome. Guanine nucleotide exchange factor (GEF) regulating homeostasis of late endocytic pathway, including endosomal positioning, maturation and secretion, possibly through activating Rab proteins such as RAB27A and RAB27B. Promotes the exchange of GDP to GTP, converting inactive GDP-bound RAB27A and RAB27B into their active GTP-bound form. This is DENN domain-containing protein 10 from Homo sapiens (Human).